Reading from the N-terminus, the 363-residue chain is Osmoprotective compounds uptake ATP-binding protein GgtA (363 aa).

The ABC transporter domain occupies 4 to 234 (VSFEQVTKQF…PANLFVAGFI (231 aa)). 36–43 (GPSGCGKT) is an ATP binding site.

The protein belongs to the ABC transporter superfamily. The complex is composed of two ATP-binding proteins (GgtA), two transmembrane proteins (GgtC and GgtD) and a solute-binding protein (GgtB).

It localises to the cell membrane. In terms of biological role, part of the ABC transporter complex GgtABCD involved in the uptake of the osmoprotective compounds glucosylglycerol (GG), sucrose and trehalose. Responsible for energy coupling to the transport system. This is Osmoprotective compounds uptake ATP-binding protein GgtA from Synechocystis sp. (strain ATCC 27184 / PCC 6803 / Kazusa).